The following is a 236-amino-acid chain: uncharacterized protein (236 aa).

A run of 7 helical transmembrane segments spans residues 32-52 (MALALLLTGVAAITTISVEPI), 61-81 (FGTIIMFAPLGIALYFFMGFG), 90-110 (ILFWVYAGLTGMSLSYLALIY), 115-135 (IARTFFICSSVFGAMSLYGYS), 144-164 (GSFFAMGLIGLIIASLVNLFL), 167-187 (SSLSFATSLIGIVVFMGLIAW), and 208-228 (LSIMAAFTLYLDFINLFLYLM).

It belongs to the BI1 family.

Its subcellular location is the cell membrane. This is an uncharacterized protein from Rickettsia prowazekii (strain Madrid E).